The following is a 311-amino-acid chain: Cytochrome f (311 aa).

The first 27 residues, 1-27 (MRRHLSLVLGSLVIGLALLIAPGASWA), serve as a signal peptide directing secretion. Heme-binding residues include tyrosine 28, cysteine 48, cysteine 51, and histidine 52. A helical transmembrane segment spans residues 277-297 (IYGLLAFFAAVAIAQIMLVLK).

Belongs to the cytochrome f family. In terms of assembly, the 4 large subunits of the cytochrome b6-f complex are cytochrome b6, subunit IV (17 kDa polypeptide, PetD), cytochrome f and the Rieske protein, while the 4 small subunits are PetG, PetL, PetM and PetN. The complex functions as a dimer. Heme is required as a cofactor.

The protein localises to the cellular thylakoid membrane. Functionally, component of the cytochrome b6-f complex, which mediates electron transfer between photosystem II (PSII) and photosystem I (PSI), cyclic electron flow around PSI, and state transitions. The protein is Cytochrome f of Synechococcus sp. (strain CC9902).